A 358-amino-acid polypeptide reads, in one-letter code: Aminomethyltransferase (358 aa).

It belongs to the GcvT family. The glycine cleavage system is composed of four proteins: P, T, L and H.

The enzyme catalyses N(6)-[(R)-S(8)-aminomethyldihydrolipoyl]-L-lysyl-[protein] + (6S)-5,6,7,8-tetrahydrofolate = N(6)-[(R)-dihydrolipoyl]-L-lysyl-[protein] + (6R)-5,10-methylene-5,6,7,8-tetrahydrofolate + NH4(+). Its function is as follows. The glycine cleavage system catalyzes the degradation of glycine. The chain is Aminomethyltransferase from Francisella tularensis subsp. tularensis (strain WY96-3418).